The following is a 167-amino-acid chain: Telethonin (167 aa).

Position 39 is a phosphoserine (serine 39). Positions 142 to 167 (PVVPVSKPGPLRRTLSRSMSQEAQRG) are disordered. Residues 157–167 (SRSMSQEAQRG) show a composition bias toward polar residues.

In terms of assembly, interacts with MYOZ1, MYOZ2 and MYOZ3. Interacts with CSRP3. Interacts directly with the N-terminal Ig-like domains of 2 titin (TTN) molecules. Interacts with ANKRD2; the interaction is direct.

It is found in the cytoplasm. The protein resides in the myofibril. It localises to the sarcomere. Functionally, muscle assembly regulating factor. Mediates the antiparallel assembly of titin (TTN) molecules at the sarcomeric Z-disk. This is Telethonin (Tcap) from Mus musculus (Mouse).